The chain runs to 496 residues: Cytochrome P450 71D178 (496 aa).

Residues 1-21 (MDISISWVVIILLVLSYLILM) form a helical; Signal-anchor for type II membrane protein membrane-spanning segment. Cysteine 435 contributes to the heme binding site.

It belongs to the cytochrome P450 family. The cofactor is heme. In terms of tissue distribution, expressed in flowers, leaves and stems, especially in glandular trichomes.

The protein localises to the membrane. It carries out the reaction (4S)-limonene + reduced [NADPH--hemoprotein reductase] + O2 = (1S,5R)-carveol + oxidized [NADPH--hemoprotein reductase] + H2O + H(+). It catalyses the reaction gamma-terpinene + 2 reduced [NADPH--hemoprotein reductase] + 2 O2 = carvacrol + 2 oxidized [NADPH--hemoprotein reductase] + 3 H2O + 2 H(+). The catalysed reaction is gamma-terpinene + 2 reduced [NADPH--hemoprotein reductase] + 2 O2 = thymol + 2 oxidized [NADPH--hemoprotein reductase] + 3 H2O + 2 H(+). The enzyme catalyses (4R)-limonene + reduced [NADPH--hemoprotein reductase] + O2 = (1R,6S)-isopiperitenol + oxidized [NADPH--hemoprotein reductase] + H2O + H(+). It participates in secondary metabolite biosynthesis; terpenoid biosynthesis. Its function is as follows. Involved in the biosynthesis of phenolic monoterpenes natural products thymol and carvacrol which have a broad range of biological activities acting as antimicrobial compounds, insecticides, antioxidants and pharmaceutical agents. Catalyzes the C2- and C3-hydroxylation of gamma-terpinene to produce carvacrol and thymol, respectively. Also mediates the C6-hydroxylation of (4S)-limonene to form carveol and the C3-hydroxylation of (4R)-limonene to generate (+)-trans-isopiperitenol. This Origanum vulgare (Wild marjoram) protein is Cytochrome P450 71D178.